The primary structure comprises 454 residues: MTDRTCLSIVLAAGEGTRMKSNLPKVLHRVAGLPLVCHVVNAVRGTGKSDVALVVGRGAEDVRSAVEKIAGPVSAFEQKERLGTAHAVLAAREAIARGYDDLLIVFGDTPLIEAQSLLAARERLAQGADLVVIGFRPASPHGYGRLIEEGGQLVAIIEEKEATDEQKKIGFCNGGLMALRGQHALALLDAVGNDNAKGEYYLTDIVAIAHGKGLNVTAIEVPVDNVIGINNRAELAEAETIWQNRKRRELMLSGVTLIAPETVFFSYDTVIEPDVVIEPNVFFGPSVHVASGALIHSFSHLEGAQVGEKAEIGPFARLRPGADLAEKSKVGNFCEVKNAKVGKGAKINHLTYIGDAVIGASSNIGAGTITCNYDGYNKFKTIIGDNAFIGSNSSLVAPVEIGDNAYIASGSVITADVPADALALGRARQETKEGRAKILREKYAAIKAAKSVSK.

Positions 1 to 232 (MTDRTCLSIV…VDNVIGINNR (232 aa)) are pyrophosphorylase. UDP-N-acetyl-alpha-D-glucosamine contacts are provided by residues 11–14 (LAAG), lysine 25, glutamine 78, and 83–84 (GT). Aspartate 108 contacts Mg(2+). UDP-N-acetyl-alpha-D-glucosamine contacts are provided by glycine 144, glutamate 158, asparagine 173, and asparagine 230. Asparagine 230 contacts Mg(2+). Residues 233-253 (AELAEAETIWQNRKRRELMLS) are linker. The interval 254–454 (GVTLIAPETV…AIKAAKSVSK (201 aa)) is N-acetyltransferase. Residues arginine 319 and lysine 337 each contribute to the UDP-N-acetyl-alpha-D-glucosamine site. Histidine 349 acts as the Proton acceptor in catalysis. UDP-N-acetyl-alpha-D-glucosamine contacts are provided by tyrosine 352 and asparagine 363. Acetyl-CoA is bound by residues alanine 366, 372–373 (NY), serine 391, serine 409, and arginine 426.

This sequence in the N-terminal section; belongs to the N-acetylglucosamine-1-phosphate uridyltransferase family. It in the C-terminal section; belongs to the transferase hexapeptide repeat family. In terms of assembly, homotrimer. Mg(2+) serves as cofactor.

It is found in the cytoplasm. The enzyme catalyses alpha-D-glucosamine 1-phosphate + acetyl-CoA = N-acetyl-alpha-D-glucosamine 1-phosphate + CoA + H(+). The catalysed reaction is N-acetyl-alpha-D-glucosamine 1-phosphate + UTP + H(+) = UDP-N-acetyl-alpha-D-glucosamine + diphosphate. Its pathway is nucleotide-sugar biosynthesis; UDP-N-acetyl-alpha-D-glucosamine biosynthesis; N-acetyl-alpha-D-glucosamine 1-phosphate from alpha-D-glucosamine 6-phosphate (route II): step 2/2. The protein operates within nucleotide-sugar biosynthesis; UDP-N-acetyl-alpha-D-glucosamine biosynthesis; UDP-N-acetyl-alpha-D-glucosamine from N-acetyl-alpha-D-glucosamine 1-phosphate: step 1/1. It functions in the pathway bacterial outer membrane biogenesis; LPS lipid A biosynthesis. Functionally, catalyzes the last two sequential reactions in the de novo biosynthetic pathway for UDP-N-acetylglucosamine (UDP-GlcNAc). The C-terminal domain catalyzes the transfer of acetyl group from acetyl coenzyme A to glucosamine-1-phosphate (GlcN-1-P) to produce N-acetylglucosamine-1-phosphate (GlcNAc-1-P), which is converted into UDP-GlcNAc by the transfer of uridine 5-monophosphate (from uridine 5-triphosphate), a reaction catalyzed by the N-terminal domain. This is Bifunctional protein GlmU from Brucella canis (strain ATCC 23365 / NCTC 10854 / RM-666).